Consider the following 123-residue polypeptide: ATP synthase epsilon chain (123 aa).

Belongs to the ATPase epsilon chain family. As to quaternary structure, F-type ATPases have 2 components, CF(1) - the catalytic core - and CF(0) - the membrane proton channel. CF(1) has five subunits: alpha(3), beta(3), gamma(1), delta(1), epsilon(1). CF(0) has three main subunits: a, b and c.

The protein localises to the cell inner membrane. Functionally, produces ATP from ADP in the presence of a proton gradient across the membrane. The polypeptide is ATP synthase epsilon chain (Helicobacter pylori (strain HPAG1)).